A 147-amino-acid polypeptide reads, in one-letter code: MGHFTEEDKATITSLWGKLNVEDAGGETLGRLLLVYPWTQRFFDSFGNLSSASAIMGNPKVKAHGKKVLTSLGDAVKNLDDLKGTFAQLSELHCDKLHVDPENFRLLGNVLVTVLAIHFGKEFTPEVQASWQKMVTGVASALSSRYH.

The Globin domain maps to 3 to 147 (HFTEEDKATI…VASALSSRYH (145 aa)). Position 13 is a phosphothreonine (Thr-13). Residues Ser-45, Ser-51, and Ser-53 each carry the phosphoserine modification. Lys-60 carries the N6-acetyllysine modification. His-64 is a heme b binding site. An N6-acetyllysine modification is found at Lys-83. His-93 serves as a coordination point for heme b. S-nitrosocysteine is present on Cys-94. Ser-140, Ser-143, and Ser-144 each carry phosphoserine.

Belongs to the globin family. As to quaternary structure, heterotetramer of two alpha chains and two gamma chains in fetal hemoglobin (Hb F). Red blood cells.

Functionally, gamma chains make up the fetal hemoglobin F, in combination with alpha chains. The polypeptide is Hemoglobin subunit gamma-2 (HBG2) (Pongo pygmaeus (Bornean orangutan)).